A 77-amino-acid polypeptide reads, in one-letter code: Translation initiation factor IF-1, chloroplastic (77 aa).

In terms of domain architecture, S1-like spans 1–71; the sequence is MKEQKLIHEG…TKGRIIYRLR (71 aa).

It belongs to the IF-1 family. Component of the 30S ribosomal translation pre-initiation complex which assembles on the 30S ribosome in the order IF-2 and IF-3, IF-1 and N-formylmethionyl-tRNA(fMet); mRNA recruitment can occur at any time during PIC assembly.

Its subcellular location is the plastid. It is found in the chloroplast. One of the essential components for the initiation of protein synthesis. Stabilizes the binding of IF-2 and IF-3 on the 30S subunit to which N-formylmethionyl-tRNA(fMet) subsequently binds. Helps modulate mRNA selection, yielding the 30S pre-initiation complex (PIC). Upon addition of the 50S ribosomal subunit IF-1, IF-2 and IF-3 are released leaving the mature 70S translation initiation complex. The polypeptide is Translation initiation factor IF-1, chloroplastic (Drimys granadensis).